Here is a 359-residue protein sequence, read N- to C-terminus: Fructose-bisphosphate aldolase, cytoplasmic isozyme (359 aa).

Positions 52 and 142 each coordinate substrate. Glu-184 functions as the Proton acceptor in the catalytic mechanism. Lys-226 functions as the Schiff-base intermediate with dihydroxyacetone-P in the catalytic mechanism.

This sequence belongs to the class I fructose-bisphosphate aldolase family.

The protein localises to the cytoplasm. It carries out the reaction beta-D-fructose 1,6-bisphosphate = D-glyceraldehyde 3-phosphate + dihydroxyacetone phosphate. It functions in the pathway carbohydrate degradation; glycolysis; D-glyceraldehyde 3-phosphate and glycerone phosphate from D-glucose: step 4/4. This Cicer arietinum (Chickpea) protein is Fructose-bisphosphate aldolase, cytoplasmic isozyme (ALDC).